Reading from the N-terminus, the 752-residue chain is Iron-sulfur clusters transporter ABCB7, mitochondrial (752 aa).

A mitochondrion-targeting transit peptide spans 1 to 22 (MALLAIHSWRWAAAAVAFEKHK). At 23–140 (HSAVLTRSLV…KDRPDLRARV (118 aa)) the chain is on the mitochondrial matrix side. The ABC transmembrane type-1 domain occupies 140-436 (VAISLGFLGG…LGTVYRETRQ (297 aa)). The helical transmembrane segment at 141–161 (AISLGFLGGAKAMNIVVPFMF) threads the bilayer. At 162–185 (KYAVDSLNQMSGNMLNLSDAPNTV) the chain is on the mitochondrial intermembrane side. The chain crosses the membrane as a helical span at residues 186–206 (ATMATAVLIGYGVSRAGAAFF). Over 207–259 (NEVRNAVFGKVAQNSIRRIAKNVFLHLHNLDLGFHLSRQTGALSKAIDRGTRG) the chain is Mitochondrial matrix. N6-acetyllysine is present on residues lysine 216 and lysine 251. Residues 260-280 (ISFVLSALVFNLLPIVFEMTL) form a helical membrane-spanning segment. Topologically, residues 281–290 (VSSVLYYKCG) are mitochondrial intermembrane. The helical transmembrane segment at 291-311 (AQFALVTLGTLGAYTAFTVAV) threads the bilayer. The Mitochondrial matrix portion of the chain corresponds to 312–382 (TRWRTRFRIE…TLAMLNFGQS (71 aa)). Residue 315–319 (RTRFR) coordinates glutathione. Serine 336 carries the phosphoserine modification. Position 340 is a phosphotyrosine (tyrosine 340). Position 342 is a phosphothreonine (threonine 342). Residue lysine 350 is modified to N6-acetyllysine. Residue 378–381 (NFGQ) participates in glutathione binding. The chain crosses the membrane as a helical span at residues 383–403 (AIFSVGLTAIMVLASQGIVAG). Residues 404–409 (ALTVGD) lie on the Mitochondrial intermembrane side of the membrane. The helical transmembrane segment at 410–430 (LVMVNGLLFQLSLPLNFLGTV) threads the bilayer. Glycine 428 serves as a coordination point for glutathione. Residues 431–752 (YRETRQALID…SVKGCGNCSC (322 aa)) are Mitochondrial matrix-facing. Residues 472–706 (VAFDNVHFEY…SSSIYSEMWH (235 aa)) form the ABC transporter domain. ATP contacts are provided by residues tyrosine 481 and 505–516 (GGSGSGKSTIVR).

The protein belongs to the ABC transporter superfamily. ABCB family. Heavy Metal importer (TC 3.A.1.210) subfamily. As to quaternary structure, homodimer or heterodimer. Interacts with C10orf88/PAAT. Forms a complex with ABCB10 and FECH, where a dimeric FECH bridges ABCB7 and ABCB10 homodimers; this complex may be required for cellular iron homeostasis, mitochondrial function and heme biosynthesis. Interacts with FECH. Interacts with ATP5F1A. Interacts with COX4I1; this interaction allows the regulation of cellular iron homeostasis and cellular reactive oxygen species (ROS) levels in cardiomyocytes.

Its subcellular location is the mitochondrion inner membrane. It carries out the reaction (glutathione)4[2Fe(III)-2S] cluster(in) + ATP + H2O = (glutathione)4[2Fe(III)-2S] cluster(out) + ADP + phosphate + H(+). In terms of biological role, exports glutathione-coordinated iron-sulfur clusters such as [2Fe-2S]-(GS)4 cluster from the mitochondria to the cytosol in an ATP-dependent manner allowing the assembly of the cytosolic iron-sulfur (Fe/S) cluster-containing proteins and participates in iron homeostasis. Moreover, through a functional complex formed of ABCB7, FECH and ABCB10, also plays a role in the cellular iron homeostasis, mitochondrial function and heme biosynthesis. In cardiomyocytes, regulates cellular iron homeostasis and cellular reactive oxygen species (ROS) levels through its interaction with COX4I1. May also play a role in hematopoiesis. The sequence is that of Iron-sulfur clusters transporter ABCB7, mitochondrial from Rattus norvegicus (Rat).